A 327-amino-acid chain; its full sequence is Tagatose 1,6-diphosphate aldolase 2 (327 aa).

The protein belongs to the aldolase LacD family.

The catalysed reaction is D-tagatofuranose 1,6-bisphosphate = D-glyceraldehyde 3-phosphate + dihydroxyacetone phosphate. Its pathway is carbohydrate metabolism; D-tagatose 6-phosphate degradation; D-glyceraldehyde 3-phosphate and glycerone phosphate from D-tagatose 6-phosphate: step 2/2. The sequence is that of Tagatose 1,6-diphosphate aldolase 2 (lacD2) from Streptococcus pyogenes serotype M3 (strain ATCC BAA-595 / MGAS315).